A 235-amino-acid polypeptide reads, in one-letter code: MEKLEMLYEGKAKQIYATDKADEVVIYYKDDATAFNGEKKGQITDKGVMNNKITSILFEQLEKQGIKTHFIKKLNDREQLCKKVEIVPLEVIVRNVAAGSMAKRLGLEEGTKLKTTVFEFSYKDDELGDPLINSYHAVAIGAATFEEIDTILEMTAKINNILKEAFAKENINLIDFKIEFGKCADGTIVLADEISPDTCRFWDATTGEKLDKDRFRRDLGNVEDAYIEILKRISK.

It belongs to the SAICAR synthetase family.

It carries out the reaction 5-amino-1-(5-phospho-D-ribosyl)imidazole-4-carboxylate + L-aspartate + ATP = (2S)-2-[5-amino-1-(5-phospho-beta-D-ribosyl)imidazole-4-carboxamido]succinate + ADP + phosphate + 2 H(+). The protein operates within purine metabolism; IMP biosynthesis via de novo pathway; 5-amino-1-(5-phospho-D-ribosyl)imidazole-4-carboxamide from 5-amino-1-(5-phospho-D-ribosyl)imidazole-4-carboxylate: step 1/2. The protein is Phosphoribosylaminoimidazole-succinocarboxamide synthase of Clostridium botulinum (strain Alaska E43 / Type E3).